The chain runs to 541 residues: Glucose-6-phosphate isomerase (541 aa).

The active-site Proton donor is glutamate 346. Catalysis depends on residues histidine 377 and lysine 506.

Belongs to the GPI family.

Its subcellular location is the cytoplasm. The catalysed reaction is alpha-D-glucose 6-phosphate = beta-D-fructose 6-phosphate. It functions in the pathway carbohydrate biosynthesis; gluconeogenesis. Its pathway is carbohydrate degradation; glycolysis; D-glyceraldehyde 3-phosphate and glycerone phosphate from D-glucose: step 2/4. Catalyzes the reversible isomerization of glucose-6-phosphate to fructose-6-phosphate. This chain is Glucose-6-phosphate isomerase, found in Rhizobium leguminosarum bv. trifolii (strain WSM2304).